A 122-amino-acid polypeptide reads, in one-letter code: Small ribosomal subunit protein bS6 (122 aa).

Residues 95 to 122 (AETAPSPMMKEVQREEAKKAAAQSEQAA) are disordered.

It belongs to the bacterial ribosomal protein bS6 family.

In terms of biological role, binds together with bS18 to 16S ribosomal RNA. The sequence is that of Small ribosomal subunit protein bS6 from Ralstonia nicotianae (strain ATCC BAA-1114 / GMI1000) (Ralstonia solanacearum).